The sequence spans 252 residues: 2-succinyl-6-hydroxy-2,4-cyclohexadiene-1-carboxylate synthase (252 aa).

It belongs to the AB hydrolase superfamily. MenH family. Monomer.

It catalyses the reaction 5-enolpyruvoyl-6-hydroxy-2-succinyl-cyclohex-3-ene-1-carboxylate = (1R,6R)-6-hydroxy-2-succinyl-cyclohexa-2,4-diene-1-carboxylate + pyruvate. The protein operates within quinol/quinone metabolism; 1,4-dihydroxy-2-naphthoate biosynthesis; 1,4-dihydroxy-2-naphthoate from chorismate: step 3/7. It functions in the pathway quinol/quinone metabolism; menaquinone biosynthesis. Catalyzes a proton abstraction reaction that results in 2,5-elimination of pyruvate from 2-succinyl-5-enolpyruvyl-6-hydroxy-3-cyclohexene-1-carboxylate (SEPHCHC) and the formation of 2-succinyl-6-hydroxy-2,4-cyclohexadiene-1-carboxylate (SHCHC). The sequence is that of 2-succinyl-6-hydroxy-2,4-cyclohexadiene-1-carboxylate synthase from Klebsiella pneumoniae (strain 342).